Consider the following 160-residue polypeptide: Large ribosomal subunit protein uL16 (160 aa).

It belongs to the universal ribosomal protein uL16 family. In terms of assembly, part of the 50S ribosomal subunit.

Functionally, binds 23S rRNA and is also seen to make contacts with the A and possibly P site tRNAs. The polypeptide is Large ribosomal subunit protein uL16 (Prochlorococcus marinus (strain MIT 9301)).